A 197-amino-acid polypeptide reads, in one-letter code: Chitin synthase 3 (197 aa).

The protein belongs to the chitin synthase family. Class III subfamily.

It is found in the cell membrane. It carries out the reaction [(1-&gt;4)-N-acetyl-beta-D-glucosaminyl](n) + UDP-N-acetyl-alpha-D-glucosamine = [(1-&gt;4)-N-acetyl-beta-D-glucosaminyl](n+1) + UDP + H(+). Functionally, polymerizes chitin, a structural polymer of the cell wall and septum, by transferring the sugar moiety of UDP-GlcNAc to the non-reducing end of the growing chitin polymer. This chain is Chitin synthase 3 (CHS3), found in Exophiala jeanselmei (Dematiaceous fungus).